Here is a 144-residue protein sequence, read N- to C-terminus: Flagellar assembly factor FliW (144 aa).

It belongs to the FliW family. In terms of assembly, interacts with translational regulator CsrA and flagellin(s).

It localises to the cytoplasm. In terms of biological role, acts as an anti-CsrA protein, binds CsrA and prevents it from repressing translation of its target genes, one of which is flagellin. Binds to flagellin and participates in the assembly of the flagellum. This chain is Flagellar assembly factor FliW, found in Geobacillus sp. (strain WCH70).